The chain runs to 158 residues: Ribonuclease H (158 aa).

Residues E3 to E144 enclose the RNase H type-1 domain. Mg(2+) is bound by residues D12, E50, D72, and D136.

This sequence belongs to the RNase H family. As to quaternary structure, monomer. Mg(2+) serves as cofactor.

The protein localises to the cytoplasm. It carries out the reaction Endonucleolytic cleavage to 5'-phosphomonoester.. Its function is as follows. Endonuclease that specifically degrades the RNA of RNA-DNA hybrids. This chain is Ribonuclease H, found in Shewanella sp. (strain MR-4).